The following is a 206-amino-acid chain: MSSSLSQTSKYQATSVVNGLLSNLLPGVPKIRANNGKTSVNNGSKAQLIDRNLKKRVQLQNRDVHKIKKKCKLVKKKKVKKHKLDKEQLEQLAKHQVLKKHQHEGTLTDHERKYLNKLIKRNSQNLRSWDLEEEVRDELEDIQQSILKDTVSTANTDRSKRRRFKRKQFKEDIKESDFVKDHRYPGLTPGLAPVGLSDEEDSSEED.

Residues 178-206 (FVKDHRYPGLTPGLAPVGLSDEEDSSEED) form a disordered region. Phosphoserine is present on residues Ser197, Ser202, and Ser203. Residues 197–206 (SDEEDSSEED) show a composition bias toward acidic residues.

This sequence belongs to the RRT14 family.

The protein resides in the nucleus. It localises to the nucleolus. In terms of biological role, involved in ribosome biogenesis, probably through modulation of rDNA transcription. The protein is Regulator of rDNA transcription protein 14 (RRT14) of Saccharomyces cerevisiae (strain ATCC 204508 / S288c) (Baker's yeast).